A 370-amino-acid polypeptide reads, in one-letter code: tRNA-specific 2-thiouridylase MnmA (370 aa).

ATP is bound by residues 9-16 (GISGGVDS) and M35. Positions 107-109 (NPD) are interaction with target base in tRNA. The active-site Nucleophile is the C112. The cysteines at positions 112 and 209 are disulfide-linked. G137 is a binding site for ATP. The segment at 159 to 161 (KDQ) is interaction with tRNA. C209 (cysteine persulfide intermediate) is an active-site residue.

The protein belongs to the MnmA/TRMU family.

It localises to the cytoplasm. The catalysed reaction is S-sulfanyl-L-cysteinyl-[protein] + uridine(34) in tRNA + AH2 + ATP = 2-thiouridine(34) in tRNA + L-cysteinyl-[protein] + A + AMP + diphosphate + H(+). Catalyzes the 2-thiolation of uridine at the wobble position (U34) of tRNA, leading to the formation of s(2)U34. This chain is tRNA-specific 2-thiouridylase MnmA, found in Mycoplasma pneumoniae (strain ATCC 29342 / M129 / Subtype 1) (Mycoplasmoides pneumoniae).